We begin with the raw amino-acid sequence, 565 residues long: Deformed epidermal autoregulatory factor 1 homolog (565 aa).

Disordered regions lie at residues 34–62 (GGEA…ETPR) and 162–190 (GLKG…KGGT). Pro residues predominate over residues 169-181 (PLTPGPQSPPTPL). Position 171 is a phosphothreonine (Thr171). Residue Ser176 is modified to Phosphoserine. At Thr179 the chain carries Phosphothreonine. Residues 193–273 (NWDPSVYDSE…QCLIQDGILN (81 aa)) form the SAND domain. The Nuclear localization signal motif lies at 301-316 (KRRKKENELPTTPVKK). The interval 403–478 (IAPFPEAALP…QLKTLFEQAK (76 aa)) is interaction with LMO4. A Phosphothreonine modification is found at Thr432. Position 448 is a phosphoserine (Ser448). The Zn(2+) site is built by Cys504, Cys507, Cys515, Cys518, Cys524, Cys528, His536, and Cys540. Residues 504 to 540 (CVNCGREAMNECTGCHKVNYCSTFCQRKDWKDHQHIC) form an MYND-type zinc finger.

Homodimer. Interacts with LMO4; LMO4 blocks export from nucleus. Interacts with LMO2 and CLIM2. May interact with the corepressors NCOR1 and NCRO2. Identified in a complex with XRCC5 and XRCC6. Interacts (via the SAND domain) with the DNA-PK complex subunit XRCC6; the interaction is direct and may be inhibited by DNA-binding. Post-translationally, may be phosphorylated by DNA-PK complex in a DNA independent manner (in vitro).

It localises to the nucleus. Transcription factor that binds to sequence with multiple copies of 5'-TTC[CG]G-3' present in its own promoter and that of the HNRPA2B1 gene. Down-regulates transcription of these genes. Binds to the retinoic acid response element (RARE) 5'-AGGGTTCACCGAAAGTTCA-3'. Activates the proenkephalin gene independently of promoter binding, probably through protein-protein interaction. Regulates epithelial cell proliferation and side-branching in the mammary gland. Required for neural tube closure and skeletal patterning. Controls the expression of peripheral tissue antigens in pancreatic lymph nodes. Transcriptional activator of EIF4G3. May also involved in behavior. The protein is Deformed epidermal autoregulatory factor 1 homolog (DEAF1) of Pan troglodytes (Chimpanzee).